Consider the following 478-residue polypeptide: 9-divinyl ether synthase (478 aa).

Position 431 (Cys-431) interacts with heme.

Belongs to the cytochrome P450 family. 9-divinyl ether synthase subfamily.

The enzyme catalyses (9S)-hydroperoxy-(10E,12Z)-octadecadienoate = colneleate + H2O. Its function is as follows. Involved in the biosynthesis of the anti-fungal toxins colneleic acid and colnelenic acid. The polypeptide is 9-divinyl ether synthase (DES) (Capsicum annuum (Capsicum pepper)).